The sequence spans 172 residues: Co-chaperone protein HscB homolog (172 aa).

Residues 2-69 (NHFELFNLPV…DSRAAYLLAL (68 aa)) form the J domain.

The protein belongs to the HscB family. In terms of assembly, interacts with HscA and stimulates its ATPase activity.

In terms of biological role, co-chaperone involved in the maturation of iron-sulfur cluster-containing proteins. Seems to help targeting proteins to be folded toward HscA. The chain is Co-chaperone protein HscB homolog from Acinetobacter baumannii (strain SDF).